The sequence spans 322 residues: Large ribosomal subunit protein uL29m (322 aa).

The tract at residues 1-44 (MLNVQRGLHTTVRLSARTKYTKPKPKPQARVIKSEPSQVTHHDN) is disordered.

This sequence belongs to the universal ribosomal protein uL29 family. Component of the mitochondrial large ribosomal subunit. Mature mitochondrial ribosomes consist of a small (37S) and a large (54S) subunit. The 37S subunit contains at least 33 different proteins and 1 molecule of RNA (15S). The 54S subunit contains at least 45 different proteins and 1 molecule of RNA (21S).

It is found in the mitochondrion. The polypeptide is Large ribosomal subunit protein uL29m (MRPL4) (Vanderwaltozyma polyspora (strain ATCC 22028 / DSM 70294 / BCRC 21397 / CBS 2163 / NBRC 10782 / NRRL Y-8283 / UCD 57-17) (Kluyveromyces polysporus)).